A 214-amino-acid polypeptide reads, in one-letter code: Probable transaldolase (214 aa).

Lysine 83 (schiff-base intermediate with substrate) is an active-site residue.

This sequence belongs to the transaldolase family. Type 3B subfamily.

Its subcellular location is the cytoplasm. It catalyses the reaction D-sedoheptulose 7-phosphate + D-glyceraldehyde 3-phosphate = D-erythrose 4-phosphate + beta-D-fructose 6-phosphate. It functions in the pathway carbohydrate degradation; pentose phosphate pathway; D-glyceraldehyde 3-phosphate and beta-D-fructose 6-phosphate from D-ribose 5-phosphate and D-xylulose 5-phosphate (non-oxidative stage): step 2/3. In terms of biological role, transaldolase is important for the balance of metabolites in the pentose-phosphate pathway. This is Probable transaldolase from Geobacter sulfurreducens (strain ATCC 51573 / DSM 12127 / PCA).